The following is a 194-amino-acid chain: Inner membrane-spanning protein YciB (194 aa).

5 helical membrane-spanning segments follow: residues 3-23, 47-67, 76-96, 119-139, and 149-169; these read LFIEYFPLLIFFIINSIAGIY, IPAKQWIIFGLIVVFGGLTIY, WKVTIINAFFAAALLVSNTFF, LNLAWALFFLFCSGLNYYIAF, and FKVFGLTGLMFLFSITSILFL.

Belongs to the YciB family.

The protein resides in the cell inner membrane. Functionally, plays a role in cell envelope biogenesis, maintenance of cell envelope integrity and membrane homeostasis. This Colwellia psychrerythraea (strain 34H / ATCC BAA-681) (Vibrio psychroerythus) protein is Inner membrane-spanning protein YciB.